The following is a 273-amino-acid chain: Large ribosomal subunit protein uL2 (273 aa).

Residues 221-263 (RGTAMNPVDHPHGGGEGRNFGKHPVTPWGVQTKGKKTRHNKRT) are disordered. Over residues 253-263 (KGKKTRHNKRT) the composition is skewed to basic residues.

This sequence belongs to the universal ribosomal protein uL2 family. In terms of assembly, part of the 50S ribosomal subunit. Forms a bridge to the 30S subunit in the 70S ribosome.

Its function is as follows. One of the primary rRNA binding proteins. Required for association of the 30S and 50S subunits to form the 70S ribosome, for tRNA binding and peptide bond formation. It has been suggested to have peptidyltransferase activity; this is somewhat controversial. Makes several contacts with the 16S rRNA in the 70S ribosome. The polypeptide is Large ribosomal subunit protein uL2 (Histophilus somni (strain 129Pt) (Haemophilus somnus)).